The chain runs to 429 residues: Ribosomal RNA small subunit methyltransferase B (429 aa).

Residues 254-260 (CAAPGGK), Asp277, Asp303, and Asp322 contribute to the S-adenosyl-L-methionine site. Catalysis depends on Cys375, which acts as the Nucleophile.

This sequence belongs to the class I-like SAM-binding methyltransferase superfamily. RsmB/NOP family.

The protein localises to the cytoplasm. The enzyme catalyses cytidine(967) in 16S rRNA + S-adenosyl-L-methionine = 5-methylcytidine(967) in 16S rRNA + S-adenosyl-L-homocysteine + H(+). In terms of biological role, specifically methylates the cytosine at position 967 (m5C967) of 16S rRNA. The polypeptide is Ribosomal RNA small subunit methyltransferase B (Escherichia coli O157:H7).